We begin with the raw amino-acid sequence, 664 residues long: L-type lectin-domain containing receptor kinase I.3 (664 aa).

The N-terminal stretch at 1–21 is a signal peptide; it reads MACRLYLALIFSCVYLICLSS. The Extracellular portion of the chain corresponds to 22 to 286; it reads QQETGFVYNG…PKEEKKKLSP (265 aa). A legume-lectin like region spans residues 24–257; it reads ETGFVYNGFE…NHYILGWSFS (234 aa). Residues N55, N125, N128, N181, N204, N225, and N267 are each glycosylated (N-linked (GlcNAc...) asparagine). Residues 287-307 form a helical membrane-spanning segment; that stretch reads LLIGLVILLVIPVVMVLGGVY. Topologically, residues 308–664 are cytoplasmic; sequence WYRRKKYAEV…THTILDGHGR (357 aa). In terms of domain architecture, Protein kinase spans 342–619; the sequence is FRKDCRVGKG…LNQDLPLPIF (278 aa). ATP-binding positions include 348 to 356 and K370; that span reads VGKGGFGEV. Residue D466 is the Proton acceptor of the active site.

In the C-terminal section; belongs to the protein kinase superfamily. Ser/Thr protein kinase family. It in the N-terminal section; belongs to the leguminous lectin family. Post-translationally, autophosphorylated on Ser and Thr residues. In terms of tissue distribution, mostly expressed in roots and flowers, and, to a lower extent, in leaves.

It localises to the cell membrane. The catalysed reaction is L-seryl-[protein] + ATP = O-phospho-L-seryl-[protein] + ADP + H(+). It catalyses the reaction L-threonyl-[protein] + ATP = O-phospho-L-threonyl-[protein] + ADP + H(+). Its function is as follows. Involved in resistance response to the pathogenic fungus Alternaria brassicicola. The polypeptide is L-type lectin-domain containing receptor kinase I.3 (Arabidopsis thaliana (Mouse-ear cress)).